Consider the following 173-residue polypeptide: MPNNQNRDNFIDKAFTVIAESIVKIMPIADKEKKAYIYYRDGLAAQNNGDYSEALDYYNESLLLEENKIDRGETLKNMAIIYMSNGEEDRSIETYQKALEENPKQPSCLKNIGLIYEKRGRFAEQNGDLDQRDMWFDKAAQVWSKAVRLYPGGYLDIENWLKTSGRSSIDIYL.

TPR repeat units lie at residues 35–68 (AYIY…EENK), 72–105 (GETL…NPKQ), and 120–153 (GRFA…YPGG).

This sequence belongs to the Ycf3 family.

The protein resides in the cellular thylakoid membrane. Its function is as follows. Essential for the assembly of the photosystem I (PSI) complex. May act as a chaperone-like factor to guide the assembly of the PSI subunits. In Prochlorococcus marinus subsp. pastoris (strain CCMP1986 / NIES-2087 / MED4), this protein is Photosystem I assembly protein Ycf3.